The chain runs to 241 residues: Endodeoxyribonuclease NucC (241 aa).

Catalysis depends on residues Asp73, Glu104, and Lys106. Residues Asp73 and Glu104 each contribute to the Mg(2+) site.

This sequence belongs to the NucC endonuclease family. As to quaternary structure, self-oligomerizes. Forms homotrimers; in the presence of cAAA the trimers associate face-to-face to form homohexamers. The 2 cAAA-binding sites are on the exterior of the hexamer at the three-way junction, there are maximally 2 cyclic nucleotides per hexamer. Requires Mg(2+) as cofactor.

Activated by cAAA and to a lesser extent cAA and cAAG; cAAA and cAA are products of its cognate CD-NTase. Cyclic nucleotide binding causes hexamerization. Cyclic nucleotide binding causes a series of shifts that enclose the cAAA molecule, enable hexamer formation and juxtapose pairs of active sites to allow dsDNA cleavage. Effector DNase of a CBASS antivirus system. CBASS (cyclic oligonucleotide-based antiphage signaling system) provides immunity against bacteriophage. The CD-NTase protein synthesizes cyclic nucleotides in response to infection; these serve as specific second messenger signals. The signals activate a diverse range of effectors, leading to bacterial cell death and thus abortive phage infection. A type III-C(AAA) CBASS system. In terms of biological role, a cyclic nucleotide-activated dsDNase. In the presence of 3',3',3'-cyclic AMP-AMP-AMP (cAAA), and to a lesser extent 3',3',3'-cyclic AMP-AMP-GMP (cAAG) and cyclic-di-AMP (c-di-AMP), endonucleolytically degrades dsDNA. Binds one cAAA in a pocket on one surface of the trimer; cAAA binding promotes hexamerization, which is necessary for nuclease activation. Also binds c-diAMP or linear di-AMP with lower affinity. The nuclease digests dsDNA to about 50 bp lengths with a 2-base 3' overhang and a consensus recognition site of 5'-Axx|T-3'. DNA has been modeled to contact a pair of juxtaposed active sites (one from each layer of the hexamer), accounting for cleavage on both strands and the 2-base overhang. Its function is as follows. Protects E.coli strain JP313 against bacteriophage lambda cI- infection. When the cdnC-cap7-cap6-nucC operon is transformed into a susceptible strain it confers bacteriophage immunity. Mutations in the sensor (Cap7 also called HORMA) or effector proteins (CdnC, NucC) but not the disassembly protein (Cap6 also called Trip13) no longer confer immunity. The presence of the intact operon leads to culture collapse and cell death which occurs before the phage has finished its replication cycle, thus protecting non-infected bacteria by aborting the phage infection and preventing its propagation. The sequence is that of Endodeoxyribonuclease NucC from Escherichia coli (strain MS 115-1).